The primary structure comprises 475 residues: Divinyl ether synthase CYP74M1 (475 aa).

Cysteine 427 is a binding site for heme.

It belongs to the cytochrome P450 family. The cofactor is heme.

The enzyme catalyses (13S)-hydroperoxy-(9Z,11E)-octadecadienoate = etheroleate + H2O. It catalyses the reaction (13S)-hydroperoxy-(9Z,11E,15Z)-octadecatrienoate = etherolenate + H2O. It participates in lipid metabolism; oxylipin biosynthesis. Divinyl ether synthase involved in oxylipin biosynthesis. Catalyzes the conversion of (13S)-hydroperoxy-(9Z,11E)-octadecadienoate (13-HPOD) to etheroleate and (13S)-hydroperoxy-(9Z,11E,15Z)-octadecatrienoate (13-HPOT) to etherolenate. Has no activity with the corresponding 9-hydroperoxides (9-HPOD and 9-HPOT). This Selaginella moellendorffii (Spikemoss) protein is Divinyl ether synthase CYP74M1.